The primary structure comprises 200 residues: MTEVLRVGQPAPDFTATAIVDQSFQTVKLSTYRGKYLVLFFYPLDFTFVCPTEIIAFSDRHSEFTALDTEVVGISVDSEFSHLAWIQTERKMGGIGNINYPLVSDLKKEISQAYNVLEPDAGIALRGLFIIDREGILQYATVNNLSFGRSVDETLRVLKAIRHVQSHPNEVCPVDWQEGDKTMIPDPEKAKTYFETVAEP.

Positions leucine 5–histidine 163 constitute a Thioredoxin domain. Residue cysteine 50 is the Cysteine sulfenic acid (-SOH) intermediate of the active site.

The protein belongs to the peroxiredoxin family. AhpC/Prx1 subfamily. In terms of assembly, homodimer; disulfide-linked, upon oxidation.

It is found in the cytoplasm. The catalysed reaction is a hydroperoxide + [thioredoxin]-dithiol = an alcohol + [thioredoxin]-disulfide + H2O. In terms of biological role, thiol-specific peroxidase that catalyzes the reduction of hydrogen peroxide and organic hydroperoxides to water and alcohols, respectively. Plays a role in cell protection against oxidative stress by detoxifying peroxides. In Synechocystis sp. (strain ATCC 27184 / PCC 6803 / Kazusa), this protein is Putative peroxiredoxin sll0755.